A 301-amino-acid chain; its full sequence is UDP-N-acetylenolpyruvoylglucosamine reductase 1 (301 aa).

The FAD-binding PCMH-type domain maps to 29–196 (KIGGPADILI…LEAEFQLQIG (168 aa)). Residue Arg-174 is part of the active site. Catalysis depends on Ser-225, which acts as the Proton donor. The active site involves Glu-295.

Belongs to the MurB family. FAD is required as a cofactor.

The protein resides in the cytoplasm. It carries out the reaction UDP-N-acetyl-alpha-D-muramate + NADP(+) = UDP-N-acetyl-3-O-(1-carboxyvinyl)-alpha-D-glucosamine + NADPH + H(+). Its pathway is cell wall biogenesis; peptidoglycan biosynthesis. In terms of biological role, cell wall formation. The chain is UDP-N-acetylenolpyruvoylglucosamine reductase 1 from Bacillus cereus (strain ZK / E33L).